Here is a 270-residue protein sequence, read N- to C-terminus: Type III pantothenate kinase (270 aa).

11 to 18 (DAGNSRIK) contacts ATP. Residues Tyr96 and 103-106 (GSDR) contribute to the substrate site. Asp105 serves as the catalytic Proton acceptor. Thr129 is a binding site for ATP. Thr195 contacts substrate.

The protein belongs to the type III pantothenate kinase family. As to quaternary structure, homodimer. It depends on NH4(+) as a cofactor. The cofactor is K(+).

The protein localises to the cytoplasm. The catalysed reaction is (R)-pantothenate + ATP = (R)-4'-phosphopantothenate + ADP + H(+). The protein operates within cofactor biosynthesis; coenzyme A biosynthesis; CoA from (R)-pantothenate: step 1/5. Catalyzes the phosphorylation of pantothenate (Pan), the first step in CoA biosynthesis. The polypeptide is Type III pantothenate kinase (Paraburkholderia xenovorans (strain LB400)).